Here is a 484-residue protein sequence, read N- to C-terminus: Vanillin dehydrogenase (484 aa).

NADP(+)-binding positions include 156 to 157 (WN), 180 to 183 (KPAS), and 234 to 235 (GS). Residues Lys180 and 234–239 (GSTPVG) contribute to the NAD(+) site. Residue Glu258 is the Proton acceptor of the active site. Leu259 is an NADP(+) binding site. Cys292 acts as the Nucleophile in catalysis. Residues Gln339 and Glu386 each coordinate NAD(+). Glu386 contributes to the NADP(+) binding site.

The protein belongs to the aldehyde dehydrogenase family. Exists as a homodimer, homotrimer and homotetramer.

The enzyme catalyses vanillin + NAD(+) + H2O = vanillate + NADH + 2 H(+). The catalysed reaction is vanillin + NADP(+) + H2O = vanillate + NADPH + 2 H(+). It catalyses the reaction 3,4-dihydroxybenzaldehyde + NAD(+) + H2O = 3,4-dihydroxybenzoate + NADH + 2 H(+). It carries out the reaction 3,4-dihydroxybenzaldehyde + NADP(+) + H2O = 3,4-dihydroxybenzoate + NADPH + 2 H(+). The enzyme catalyses 4-hydroxybenzaldehyde + NAD(+) + H2O = 4-hydroxybenzoate + NADH + 2 H(+). The catalysed reaction is 4-hydroxybenzaldehyde + NADP(+) + H2O = 4-hydroxybenzoate + NADPH + 2 H(+). In terms of biological role, catalyzes oxidation of vanillin to vanillate. Also oxidizes 3,4-dihydroxybenzaldehyde and 4-hydroxybenzaldehyde significantly. Other aromatic aldehyde substrates in the order of decreasing activity include 3-hydroxybenzaldehyde, 4-nitrobenzaldehyde, terephthalaldehyde, 2,4-dichlorobenzaldehyde, benzaldehyde and 3-phenylpropanal. Low activity with phthalaldehyde, cinnamaldehyde and syringaldehyde. No activity with phenylacetaldehyde, formaldehyde or aldehyde. Active with both NAD(+) and NADP(+). Involved in the degradation pathway of lignin-derived aromatic compounds of plant cell walls. Catalyzes the conversion of vanillin to vanillate due to toxicity of vanillin to the cells. This Corynebacterium glutamicum (strain ATCC 13032 / DSM 20300 / JCM 1318 / BCRC 11384 / CCUG 27702 / LMG 3730 / NBRC 12168 / NCIMB 10025 / NRRL B-2784 / 534) protein is Vanillin dehydrogenase.